Consider the following 154-residue polypeptide: 6,7-dimethyl-8-ribityllumazine synthase (154 aa).

5-amino-6-(D-ribitylamino)uracil is bound by residues Phe-22, 56 to 58 (AFE), and 80 to 82 (TVI). Residue 85-86 (AT) coordinates (2S)-2-hydroxy-3-oxobutyl phosphate. His-88 (proton donor) is an active-site residue. Phe-113 lines the 5-amino-6-(D-ribitylamino)uracil pocket. Residue Arg-127 participates in (2S)-2-hydroxy-3-oxobutyl phosphate binding.

This sequence belongs to the DMRL synthase family. As to quaternary structure, forms an icosahedral capsid composed of 60 subunits, arranged as a dodecamer of pentamers.

It carries out the reaction (2S)-2-hydroxy-3-oxobutyl phosphate + 5-amino-6-(D-ribitylamino)uracil = 6,7-dimethyl-8-(1-D-ribityl)lumazine + phosphate + 2 H2O + H(+). It functions in the pathway cofactor biosynthesis; riboflavin biosynthesis; riboflavin from 2-hydroxy-3-oxobutyl phosphate and 5-amino-6-(D-ribitylamino)uracil: step 1/2. In terms of biological role, catalyzes the formation of 6,7-dimethyl-8-ribityllumazine by condensation of 5-amino-6-(D-ribitylamino)uracil with 3,4-dihydroxy-2-butanone 4-phosphate. This is the penultimate step in the biosynthesis of riboflavin. This chain is 6,7-dimethyl-8-ribityllumazine synthase, found in Bacillus pumilus (strain SAFR-032).